A 443-amino-acid polypeptide reads, in one-letter code: Serine/threonine-protein phosphatase 2A 55 kDa regulatory subunit B beta isoform (443 aa).

WD repeat units follow at residues 22-61 (TEAD…KNQP), 87-128 (EIEE…KRPE), 171-209 (AHTY…RSFN), 220-260 (ELTE…LCDR), 279-317 (EIIS…RPIE), 334-375 (ENDC…DVTL), and 410-443 (DFSK…DKVN).

It belongs to the phosphatase 2A regulatory subunit B family. In terms of assembly, PP2A consists of a common heterodimeric core enzyme, composed of a 36 kDa catalytic subunit (subunit C) and a 65 kDa constant regulatory subunit (PR65 or subunit A), that associates with a variety of regulatory subunits.

It localises to the cytoplasm. It is found in the cytoskeleton. The protein resides in the membrane. The B regulatory subunit might modulate substrate selectivity and catalytic activity, and might also direct the localization of the catalytic enzyme to a particular subcellular compartment. Negatively controls the initiation of oocyte maturation. The protein is Serine/threonine-protein phosphatase 2A 55 kDa regulatory subunit B beta isoform (ppp2r2b) of Xenopus tropicalis (Western clawed frog).